Here is a 93-residue protein sequence, read N- to C-terminus: LGTDIISPPVCGNELLEVGEECDCGTPENCQNECCDAATCKLKSGSECGHGDCCEQCKFTKSGTECRASMSECDPAEHCTGQSSECPADVGHK.

Residues 8 to 93 form the Disintegrin domain; sequence PPVCGNELLE…SECPADVGHK (86 aa). The Ca(2+) site is built by valine 10, asparagine 13, leucine 15, glutamate 17, glutamate 20, and aspartate 23. Cystine bridges form between cysteine 11–cysteine 40, cysteine 22–cysteine 35, cysteine 24–cysteine 30, cysteine 34–cysteine 57, cysteine 48–cysteine 54, cysteine 53–cysteine 79, and cysteine 66–cysteine 86. The short motif at 72-74 is the D/ECD-tripeptide element; sequence ECD. Ca(2+) contacts are provided by aspartate 74, proline 75, glutamate 77, aspartate 89, and valine 90. Positions 74-93 are disordered; sequence DPAEHCTGQSSECPADVGHK.

This sequence belongs to the venom metalloproteinase (M12B) family. P-III subfamily. As to quaternary structure, monomer. The cofactor is Zn(2+). In terms of processing, N-glycosylated. In terms of tissue distribution, expressed by the venom gland.

It is found in the secreted. Functionally, snake venom zinc metalloprotease that possesses hemorrhagic activity. The disintegrin-like domain has been expressed and named leucurogin. This recombinant disintegrin is able to inhibit collagen-induced platelet aggregation but not ADP- or arachidonic acid-induced platelet aggregation. Furthermore, it inhibits the adhesion of human fibroblasts to collagen type I. It also reduces adhesion and migration of human fibroblasts and inhibits migration and proliferation of human and mouse melanoma cell lines (BLM, and B16-F10-Nex2). In vitro, it inhibits the vascular structures formation by endothelial cells. In addition, it inhibits the growth of experimental Ehrlich tumor and has anti-angiogenesis effect on the sponge implant model. In vivo, when intraperitoneally injected into mice, it inhibits lung metastasis of B16F10 Nex-2 cells. In the treatment of human melanoma, grafted intradermally in the nude mice flank, it inhibits tumor growth. The chain is Zinc metalloproteinase-disintegrin-like leucurogin from Bothrops leucurus (Whitetail lancehead).